A 434-amino-acid chain; its full sequence is Histidinol dehydrogenase (434 aa).

NAD(+) contacts are provided by Y130, Q191, and N214. Substrate contacts are provided by S237, Q259, and H262. Zn(2+) contacts are provided by Q259 and H262. Catalysis depends on proton acceptor residues E327 and H328. Residues H328, D361, E415, and H420 each coordinate substrate. Residue D361 coordinates Zn(2+). H420 is a Zn(2+) binding site.

It belongs to the histidinol dehydrogenase family. The cofactor is Zn(2+).

It catalyses the reaction L-histidinol + 2 NAD(+) + H2O = L-histidine + 2 NADH + 3 H(+). Its pathway is amino-acid biosynthesis; L-histidine biosynthesis; L-histidine from 5-phospho-alpha-D-ribose 1-diphosphate: step 9/9. Its function is as follows. Catalyzes the sequential NAD-dependent oxidations of L-histidinol to L-histidinaldehyde and then to L-histidine. The polypeptide is Histidinol dehydrogenase (Rhizobium meliloti (strain 1021) (Ensifer meliloti)).